A 306-amino-acid polypeptide reads, in one-letter code: tRNA dimethylallyltransferase 1 (306 aa).

ATP is bound at residue 15-22 (GPTGSGKS). Residue 17–22 (TGSGKS) participates in substrate binding. The interaction with substrate tRNA stretch occupies residues 40–43 (DSMQ).

This sequence belongs to the IPP transferase family. In terms of assembly, monomer. The cofactor is Mg(2+).

The enzyme catalyses adenosine(37) in tRNA + dimethylallyl diphosphate = N(6)-dimethylallyladenosine(37) in tRNA + diphosphate. Catalyzes the transfer of a dimethylallyl group onto the adenine at position 37 in tRNAs that read codons beginning with uridine, leading to the formation of N6-(dimethylallyl)adenosine (i(6)A). In Citrifermentans bemidjiense (strain ATCC BAA-1014 / DSM 16622 / JCM 12645 / Bem) (Geobacter bemidjiensis), this protein is tRNA dimethylallyltransferase 1.